The chain runs to 391 residues: Small ribosomal subunit protein bS1 (391 aa).

4 S1 motif domains span residues Gly16–Arg90, Asn108–Lys173, Gly194–Lys262, and Asn279–Lys348.

It belongs to the bacterial ribosomal protein bS1 family.

In terms of biological role, binds mRNA; thus facilitating recognition of the initiation point. It is needed to translate mRNA with a short Shine-Dalgarno (SD) purine-rich sequence. In Staphylococcus aureus (strain N315), this protein is Small ribosomal subunit protein bS1 (rpsA).